The chain runs to 235 residues: Phosphoribosylaminoimidazole-succinocarboxamide synthase (235 aa).

The protein belongs to the SAICAR synthetase family.

It carries out the reaction 5-amino-1-(5-phospho-D-ribosyl)imidazole-4-carboxylate + L-aspartate + ATP = (2S)-2-[5-amino-1-(5-phospho-beta-D-ribosyl)imidazole-4-carboxamido]succinate + ADP + phosphate + 2 H(+). The protein operates within purine metabolism; IMP biosynthesis via de novo pathway; 5-amino-1-(5-phospho-D-ribosyl)imidazole-4-carboxamide from 5-amino-1-(5-phospho-D-ribosyl)imidazole-4-carboxylate: step 1/2. The protein is Phosphoribosylaminoimidazole-succinocarboxamide synthase of Streptococcus thermophilus (strain ATCC BAA-491 / LMD-9).